The sequence spans 929 residues: Facilitated trehalose transporter Tret1 (929 aa).

The tract at residues 1-275 is disordered; that stretch reads MSGRDNRAAG…VGYQQQKATS (275 aa). Residues 1 to 462 are Cytoplasmic-facing; it reads MSGRDNRAAG…LEVYRPTTNP (462 aa). Gly residues predominate over residues 10 to 26; that stretch reads GAGGGSGGGGGGGGGGG. Positions 41–59 are enriched in basic and acidic residues; the sequence is KLKEKLTRAGEELGYHRVE. The span at 60-72 shows a compositional bias: polar residues; sequence SNLSASNTATSLD. Composition is skewed to low complexity over residues 85–141, 168–178, and 237–254; these read AAPQ…QPLR, QEIQQQQLQQQ, and SNSN…VAAD. Phosphoserine is present on residues Ser-320, Ser-321, and Ser-322. The segment at 352 to 371 is disordered; that stretch reads VLHGSSTDSDEEGEDAEHKR. A phosphoserine mark is found at Ser-392 and Ser-394. Residues 398–420 form a disordered region; it reads FLSSRQNFQQQRSISTDSRKSRR. Residues 402–413 are compositionally biased toward polar residues; sequence RQNFQQQRSIST. Residues 463-483 traverse the membrane as a helical segment; that stretch reads IYIWTQVLAALSVSLGSLVVG. The Extracellular portion of the chain corresponds to 484 to 512; the sequence is FSSAYTSPALVSMTDRNLTSFDVSTEDAS. The N-linked (GlcNAc...) asparagine glycan is linked to Asn-500. A helical transmembrane segment spans residues 513–533; the sequence is WVGGIMPLAGLAGGIAGGPLI. Residues 534 to 541 lie on the Cytoplasmic side of the membrane; the sequence is EYLGRRNT. Residues 542-562 form a helical membrane-spanning segment; sequence ILATAVPFIISWLLIACAVNV. The Extracellular segment spans residues 563–569; the sequence is PMVLSGR. Residues 570–590 traverse the membrane as a helical segment; the sequence is FLAGFCVGIASLSLPVYLGET. The Cytoplasmic portion of the chain corresponds to 591 to 596; the sequence is VQPEVR. A helical membrane pass occupies residues 597 to 617; sequence GTLGLLPTAFGNIGILLCFIA. Over 618 to 624 the chain is Extracellular; it reads GTYMDWS. A helical membrane pass occupies residues 625 to 645; it reads MLAFLGGALPVPFLILMFLIP. The Cytoplasmic portion of the chain corresponds to 646 to 708; it reads ETPRWYVSRG…ELLKRSNLKP (63 aa). A helical membrane pass occupies residues 709 to 729; the sequence is LSISLGLMFFQQLSGINAVIF. The Extracellular segment spans residues 730 to 745; sequence YTVQIFKDAGSTLDGN. The helical transmembrane segment at 746–766 threads the bilayer; sequence VCTIIVGTVNFIATFIGILLI. The Cytoplasmic portion of the chain corresponds to 767–772; that stretch reads DRAGRK. A helical transmembrane segment spans residues 773-793; the sequence is ILLYVSNIAMILTLFVLGGFF. Over 794 to 804 the chain is Extracellular; it reads YCKANGMDVSN. Residues 805 to 825 form a helical membrane-spanning segment; it reads VGLLPLCCFVVYILGFSLGFG. Residues 826-839 are Cytoplasmic-facing; it reads PIPWLMMGEILPAK. The chain crosses the membrane as a helical span at residues 840 to 860; that stretch reads IRGSAASVATAFNWTCTFVVT. Residues 861-873 are Extracellular-facing; sequence KSFLDMIKLIGAH. The chain crosses the membrane as a helical span at residues 874–894; sequence GAFWLFGVICCIGMFFVIFCV. At 895–929 the chain is on the cytoplasmic side; that stretch reads PETQGKTLEDIERKMMGRVRRMSSVANIKPLSFNM. Ser-917 and Ser-918 each carry phosphoserine.

Belongs to the major facilitator superfamily. Sugar transporter (TC 2.A.1.1) family. Trehalose transporter subfamily.

The protein resides in the cell membrane. In terms of biological role, low-capacity facilitative transporter for trehalose. Does not transport maltose, sucrose or lactose. Mediates the bidirectional transfer of trehalose. Responsible for the transport of trehalose synthesized in the fat body and the incorporation of trehalose into other tissues that require a carbon source, thereby regulating trehalose levels in the hemolymph. The polypeptide is Facilitated trehalose transporter Tret1 (Drosophila grimshawi (Hawaiian fruit fly)).